The following is an 83-amino-acid chain: Conotoxin VnMKLT1-022 (83 aa).

Positions 1–22 (MKLMCMMIVAVLFLTAWTFVTA) are cleaved as a signal peptide. Positions 23-55 (DDSINGPENRRIWEKLLSKTRDEMKNPEASKLN) are excised as a propeptide. Disulfide bonds link C59-C74, C66-C78, and C73-C82.

This sequence belongs to the conotoxin O1 superfamily. In terms of tissue distribution, expressed by the venom duct.

The protein resides in the secreted. In Conus ventricosus (Mediterranean cone), this protein is Conotoxin VnMKLT1-022.